The chain runs to 230 residues: Cytochrome c-552 (230 aa).

Positions Met1 to Ala47 are cleaved as a signal peptide. Positions 63, 66, 67, 166, 169, and 170 each coordinate heme c.

Binds 2 heme c groups covalently per subunit.

It localises to the periplasm. Diheme, high potential cytochrome c. The chain is Cytochrome c-552 (cyc1) from Acidithiobacillus ferridurans.